Here is a 336-residue protein sequence, read N- to C-terminus: tRNA-splicing endonuclease (336 aa).

Catalysis depends on residues Tyr-271, His-282, and Lys-313.

This sequence belongs to the tRNA-intron endonuclease family. Archaeal long subfamily. In terms of assembly, homodimer.

It carries out the reaction pretRNA = a 3'-half-tRNA molecule with a 5'-OH end + a 5'-half-tRNA molecule with a 2',3'-cyclic phosphate end + an intron with a 2',3'-cyclic phosphate and a 5'-hydroxyl terminus.. In terms of biological role, endonuclease that removes tRNA introns. Cleaves pre-tRNA at the 5'- and 3'-splice sites to release the intron. The products are an intron and two tRNA half-molecules bearing 2',3' cyclic phosphate and 5'-OH termini. Recognizes a pseudosymmetric substrate in which 2 bulged loops of 3 bases are separated by a stem of 4 bp. In Natronomonas pharaonis (strain ATCC 35678 / DSM 2160 / CIP 103997 / JCM 8858 / NBRC 14720 / NCIMB 2260 / Gabara) (Halobacterium pharaonis), this protein is tRNA-splicing endonuclease.